The primary structure comprises 245 residues: Octanoyltransferase (245 aa).

Residues 54–242 (QNAHEQVWLL…SFEQIFGPII (189 aa)) enclose the BPL/LPL catalytic domain. Substrate-binding positions include 93 to 100 (RGGEFTYH), 173 to 175 (AIG), and 186 to 188 (GVS). The Acyl-thioester intermediate role is filled by Cys-204.

It belongs to the LipB family.

The protein resides in the cytoplasm. It catalyses the reaction octanoyl-[ACP] + L-lysyl-[protein] = N(6)-octanoyl-L-lysyl-[protein] + holo-[ACP] + H(+). The protein operates within protein modification; protein lipoylation via endogenous pathway; protein N(6)-(lipoyl)lysine from octanoyl-[acyl-carrier-protein]: step 1/2. In terms of biological role, catalyzes the transfer of endogenously produced octanoic acid from octanoyl-acyl-carrier-protein onto the lipoyl domains of lipoate-dependent enzymes. Lipoyl-ACP can also act as a substrate although octanoyl-ACP is likely to be the physiological substrate. This chain is Octanoyltransferase, found in Bartonella henselae (strain ATCC 49882 / DSM 28221 / CCUG 30454 / Houston 1) (Rochalimaea henselae).